A 244-amino-acid polypeptide reads, in one-letter code: INO80 complex subunit E (244 aa).

Positions 10 to 54 (DYKKKYRNLKRKLKFLIYEHECFQEELRKAQRKLLKVSRDKSFLL) form a coiled coil. Disordered stretches follow at residues 59 to 187 (QYEN…PLTF) and 222 to 244 (FSDA…DIPE). Low complexity-rich tracts occupy residues 99-115 (PPLG…LPPS) and 122-136 (ASRA…LASP). A compositionally biased stretch (basic residues) spans 157–171 (RPKREKRPRLPRKLK). Residues lysine 159 and lysine 171 each participate in a glycyl lysine isopeptide (Lys-Gly) (interchain with G-Cter in SUMO2) cross-link. The segment covering 230–244 (DALDGDDDLVIDIPE) has biased composition (acidic residues).

In terms of assembly, component of the chromatin remodeling INO80 complex; specifically part of a complex module associated with the N-terminus of INO80.

The protein resides in the nucleus. In terms of biological role, putative regulatory component of the chromatin remodeling INO80 complex which is involved in transcriptional regulation, DNA replication and probably DNA repair. In Bos taurus (Bovine), this protein is INO80 complex subunit E (INO80E).